The primary structure comprises 536 residues: MFERTSKPAFVENICVESMRCPKSAVTMRNEELLFSNGTTNKMNGALDHSDQPDPDAIKMFVGQIPRSWSEKELKDLFEPYGAVYQINVLRDRSQNPPQSKGCCFVTFYTRKAALEAQNALHNIKTLPGMHHPIQMKPADSEKSNAVEDRKLFIGMVSKKCNENDIRVMFSPFGQIEECRILRGPDGLSRGCAFVTFSTRAMAQNAIKAMHQSQTMEGCSSPIVVKFADTQKDKEQRRLQQQLAQQMQQLNTATWGNLTGLGGLTPQYLALLQQATTPSNLGAFSGIQQMAGMNALQLQNLATLAAAAAAAQTSATTTNVNPLSTTASALGALTSPVAASTANSSAGAAMNSLTSLGTLQGLAGATVGLNNINALAGTVNIAQMLSGMAALNGGLGATGLTNGTAGTMDALTQAYSGIQQYAAAALPTLYSQSLLQQQSAAGSQKEGPEGANLFIYHLPQEFGDQDILQMFMPFGNVISAKVFIDKQTNLSKCFGFVSYDNPVSAQAAIQAMNGFQIGMKRLKVQLKRSKNDSKPY.

3 RRM domains span residues 58–141 (IKMF…PADS), 150–230 (RKLF…FADT), and 451–529 (ANLF…LKRS).

It belongs to the CELF/BRUNOL family.

The protein resides in the nucleus. It is found in the cytoplasm. Functionally, RNA-binding protein implicated in the regulation of several post-transcriptional events. May be involved in pre-mRNA alternative splicing, mRNA translation repression and stability. This chain is CUGBP Elav-like family member 2 (celf2), found in Xenopus laevis (African clawed frog).